The sequence spans 624 residues: MLRSSFTQSRQLLLSPARSRTAAQWLPKAGASNRLAGQRFFADAKPPVTGAPTPASPSSESPIPPESVPKPSPAAEAPPPPPPPPAPARKTGRFRKFLLYLILTSGFAYGGGIFLALKSDNFHDFFTEYVPYGEDCVLYFEERDFYRRFPNTLRNQNRAPKDEGHTVTIPSKSGLSWKVADEESGADVSQKGPHMSALDNGEKAQLKPGAAKPEEKVAAVEKAKAESAAKEQSSDDKKKVQEEPKKPAAPAVTPIEFATVSEGDEEVVQELVKTFNDIITVIGADENAHKFSGAVNKAKEELRTIGEKIIAIRNEARNAAQEEIKQAHATFDESARELIRRFEEARAHDAAQYREEFEVERERLARAYQEKVNTELQRAQEVAEQRLKNELVEQAIELNRKYLHEVKDLVEREREGRLSKLNELTANVNLLEKLTTDWKEVIDTNLKTQQLQVAVDAVRSVLERSTVPRPFVRELVAVKELAAGDPVVEAAIASINPTAYQRGIPSTSQIIERFRRVADEVRKASLLPEDAGIASHAASLVLSKVMFKKDAVAGSDDVESVLLRTEHLLEEGNLDDAAREMNTLKGWAKILSKDWLSDVRRVLEVKQALEVIETEARLQCLRVE.

Residues 1–41 constitute a mitochondrion transit peptide; it reads MLRSSFTQSRQLLLSPARSRTAAQWLPKAGASNRLAGQRFF. Residues 42-89 form a disordered region; that stretch reads ADAKPPVTGAPTPASPSSESPIPPESVPKPSPAAEAPPPPPPPPAPAR. At 42–96 the chain is on the mitochondrial matrix side; that stretch reads ADAKPPVTGAPTPASPSSESPIPPESVPKPSPAAEAPPPPPPPPAPARKTGRFRK. Positions 46–61 are enriched in low complexity; the sequence is PPVTGAPTPASPSSES. The segment covering 62–87 has biased composition (pro residues); sequence PIPPESVPKPSPAAEAPPPPPPPPAP. Residues 97–117 form a helical membrane-spanning segment; that stretch reads FLLYLILTSGFAYGGGIFLAL. Residues 118 to 624 are Mitochondrial intermembrane-facing; sequence KSDNFHDFFT…EARLQCLRVE (507 aa). The disordered stretch occupies residues 156–250; that stretch reads QNRAPKDEGH…QEEPKKPAAP (95 aa). Basic and acidic residues predominate over residues 212 to 246; that stretch reads KPEEKVAAVEKAKAESAAKEQSSDDKKKVQEEPKK. Residues 295–440 are a coiled coil; sequence VNKAKEELRT…LEKLTTDWKE (146 aa).

Belongs to the MICOS complex subunit Mic60 family. In terms of assembly, component of the mitochondrial contact site and cristae organizing system (MICOS) complex.

The protein localises to the mitochondrion inner membrane. Functionally, component of the MICOS complex, a large protein complex of the mitochondrial inner membrane that plays crucial roles in the maintenance of crista junctions, inner membrane architecture, and formation of contact sites to the outer membrane. Plays a role in keeping cristae membranes connected to the inner boundary membrane. Also promotes protein import via the mitochondrial intermembrane space assembly (MIA) pathway. The chain is MICOS complex subunit MIC60 (MIC60) from Neosartorya fischeri (strain ATCC 1020 / DSM 3700 / CBS 544.65 / FGSC A1164 / JCM 1740 / NRRL 181 / WB 181) (Aspergillus fischerianus).